Reading from the N-terminus, the 279-residue chain is Four and a half LIM domains protein 2 (279 aa).

The segment at 7–31 (CHHCEDSLFGRKYVLREEQPYCVAC) adopts a C4-type zinc-finger fold. LIM zinc-binding domains follow at residues 40–92 (CEEC…CTDC), 101–153 (CQEC…CVPC), and 162–212 (CVQC…CLGC). Lys-78 is covalently cross-linked (Glycyl lysine isopeptide (Lys-Gly) (interchain with G-Cter in SUMO2)). Glycyl lysine isopeptide (Lys-Gly) (interchain with G-Cter in SUMO2) cross-links involve residues Lys-167 and Lys-220. An LIM zinc-binding 4 domain is found at 221–275 (CAGCANPISGLGGTKYISFEERQWHNDCFNCKKCSLSLVGRGFLTERDDILCPDC). Ser-238 is subject to Phosphoserine.

Interacts with ZNF638 and TTN/titin. Interacts with E4F1. Interacts with GRB7. Interacts with SIRT1 and FOXO1. Interacts with CEFIP and calcineurin. Interacts with FOXK1.

It is found in the cytoplasm. It localises to the nucleus. The protein resides in the myofibril. Its subcellular location is the sarcomere. The protein localises to the z line. In terms of biological role, may function as a molecular transmitter linking various signaling pathways to transcriptional regulation. Negatively regulates the transcriptional repressor E4F1 and may function in cell growth. Inhibits the transcriptional activity of FOXO1 and its apoptotic function by enhancing the interaction of FOXO1 with SIRT1 and FOXO1 deacetylation. Negatively regulates the calcineurin/NFAT signaling pathway in cardiomyocytes. The sequence is that of Four and a half LIM domains protein 2 (FHL2) from Bos taurus (Bovine).